We begin with the raw amino-acid sequence, 206 residues long: Somatotropin (206 aa).

The N-terminal stretch at 1–18 (MLDRVVVLLSVLCLGVSS) is a signal peptide. Glutamine 19 bears the Pyrrolidone carboxylic acid mark. Position 37 (histidine 37) interacts with Zn(2+). Cysteine 70 and cysteine 179 are disulfide-bonded. A Zn(2+)-binding site is contributed by glutamate 188. The cysteines at positions 196 and 204 are disulfide-linked.

The protein belongs to the somatotropin/prolactin family.

Its subcellular location is the secreted. Functionally, growth hormone plays an important role in growth control and is involved in the regulation of several anabolic processes. Implicated as an osmoregulatory substance important for seawater adaptation. The sequence is that of Somatotropin (gh) from Pseudocaranx dentex (White trevally).